The chain runs to 228 residues: Deoxyguanosine kinase (228 aa).

Position 8 to 16 (8 to 16 (GPIGAGKSS)) interacts with ATP. The substrate site is built by glutamate 32, tyrosine 44, and glutamine 55. Catalysis depends on aspartate 78, which acts as the Proton acceptor. Arginine 79, aspartate 84, and glutamate 149 together coordinate substrate.

The protein belongs to the DCK/DGK family. Heterodimer of a deoxyadenosine (DAK) and a deoxyguanosine kinase (DGK).

It catalyses the reaction 2'-deoxyguanosine + ATP = dGMP + ADP + H(+). Functionally, DGK/DAK plays an essential role in generating the deoxyribonucleotide precursors, dGTP and dATP, for DNA metabolism. This chain is Deoxyguanosine kinase, found in Lactobacillus acidophilus (strain ATCC 700396 / NCK56 / N2 / NCFM).